Consider the following 978-residue polypeptide: LRR receptor-like serine/threonine-protein kinase ER1 (978 aa).

An N-terminal signal peptide occupies residues 1–24 (MTPAPAAASYRALVALLLVAVAVA). Over 25-577 (DDGSTLLEIK…GHQQKPLISK (553 aa)) the chain is Extracellular. Residues Asn-62 and Asn-71 are each glycosylated (N-linked (GlcNAc...) asparagine). 20 LRR repeats span residues 66-87 (AVAA…AVGR), 88-112 (LKGI…IGDC), 114-136 (SLKT…VSKL), 137-159 (KHIE…TLSQ), 160-184 (LPNL…IYWN), 186-208 (VLQY…ICQL), 209-232 (TGLW…IGNC), 233-257 (TSFQ…GFLQ), 259-278 (ATLS…VIGL), 279-302 (MQAL…ILGN), 304-327 (TYTE…LGNM), 328-350 (STLH…EFGK), 352-375 (TGLF…ISSC), 377-399 (NLNS…LHKL), 400-423 (ESMT…LSRI), 424-447 (NNLD…IGSL), 449-470 (HLLR…EIGN), 471-494 (LRSI…ELGM), 496-518 (QNLM…LMNC), and 519-543 (FSLN…NFSR). 2 N-linked (GlcNAc...) asparagine glycosylation sites follow: Asn-218 and Asn-231. Residues Asn-302 and Asn-326 are each glycosylated (N-linked (GlcNAc...) asparagine). N-linked (GlcNAc...) asparagine glycans are attached at residues Asn-371, Asn-389, and Asn-406. An N-linked (GlcNAc...) asparagine glycan is attached at Asn-454. N-linked (GlcNAc...) asparagine glycosylation is found at Asn-507, Asn-525, and Asn-540. Residues 578-598 (AAILGIAVGGLVILLMILVAV) form a helical membrane-spanning segment. The Cytoplasmic portion of the chain corresponds to 599–978 (CRPHSPPVFK…FGEVISQNTE (380 aa)). A Protein kinase domain is found at 645–916 (LSEKYIIGYG…EVVRVLDCLV (272 aa)). Residues 651–659 (IGYGASSTV) and Lys-673 each bind ATP. Asp-771 acts as the Proton acceptor in catalysis.

This sequence belongs to the protein kinase superfamily. Ser/Thr protein kinase family.

It is found in the cell membrane. It carries out the reaction L-seryl-[protein] + ATP = O-phospho-L-seryl-[protein] + ADP + H(+). It catalyses the reaction L-threonyl-[protein] + ATP = O-phospho-L-threonyl-[protein] + ADP + H(+). Its function is as follows. Receptor kinase involved in the regulation of thermotolerance. Functions as a positive regulator of heat tolerance. May be involved in the regulation of cell proliferation and cell growth. In Oryza sativa subsp. japonica (Rice), this protein is LRR receptor-like serine/threonine-protein kinase ER1.